We begin with the raw amino-acid sequence, 283 residues long: Short-chain dehydrogenase anuB (283 aa).

Residues Thr-57, Asp-78, Asn-106, Tyr-166, Lys-170, Val-199, and Thr-201 each contribute to the NADP(+) site. Residue Tyr-166 is the Proton acceptor of the active site. The active-site Proton donor is the Tyr-166. The active-site Lowers pKa of active site Tyr is Lys-170.

The protein belongs to the short-chain dehydrogenases/reductases (SDR) family.

The protein operates within secondary metabolite biosynthesis. Its function is as follows. Highly reducing polyketide synthase; part of the gene cluster that mediates the biosynthesis of annullatin D, an alkylated aromatic polyketide with a fused dihydrobenzofuran lactone ring system that exhibits potent agonistic activities toward the cannabinoid receptors. The annullatin backbone 2-hydroxymethyl-3-pentylphenol is assembled from one acetyl-CoA starter unit and 5 malonyl-CoA elongation units by cooperation of the highly reducing polyketide synthase anuA, the short-chain dehydrogenase anuB and the oxidoreductase anuC, before being hydroxylated at the C-5 alkyl chain by the cytochrome P450 monooxygenase anuE to form (8S)-annullatin E. The prenyltransferase anuH subsequently installs one isoprenyl group at the benzene ring to form (8S)-annullatin J. Enzymatic or nonenzymatic dihydro-benzofuran ring formation between the prenyl and the phenolic hydroxyl groups in (8S)-annullatin J results in two diastereomers (2S,9S)-annullatin H and compound 12. The intermediate (2S,9S)-annullatin H is then converted to (2S,9S)-annullatin D by the FAD-linked oxidoreductase anuG-catalyzed five-member lactone ring formation. The isomer 12 acts as a substrate for the short-chain dehydrogenase anuF and is oxidized to (2R)-annullatin F, which is subsequently acetylated by an acetyltransferase leading to (2R)-annullatin G formation. The remaining enzymes identified within the cluster, anuD, anuI and anuJ, seem not to be involved in annullatin biosynthesis. This Penicillium roqueforti (strain FM164) protein is Short-chain dehydrogenase anuB.